We begin with the raw amino-acid sequence, 2138 residues long: DNA polymerase epsilon catalytic subunit B (2138 aa).

Positions 1224–1231 match the Nuclear localization signal 1 motif; that stretch reads EKRKWKMT. Positions 2015, 2018, 2040, and 2045 each coordinate Zn(2+). A CysA-type zinc finger spans residues 2015-2045; it reads CSNCGAYRDLDFCRDSALLTEKEWSCADPQC. Cysteine 2076, cysteine 2079, cysteine 2091, and cysteine 2093 together coordinate [4Fe-4S] cluster. Residues 2076 to 2093 carry the CysB motif motif; that stretch reads CNRCNQVKAAHLTEQCEC. The Nuclear localization signal 2 motif lies at 2107–2114; sequence HKRIEIFL.

Belongs to the DNA polymerase type-B family. In terms of assembly, heterotetramer. Requires [4Fe-4S] cluster as cofactor. Mostly expressed at low levels in inflorescence (floral meristem and flowers until anthesis), and, to a lower extent, in seeds.

It is found in the nucleus. It catalyses the reaction DNA(n) + a 2'-deoxyribonucleoside 5'-triphosphate = DNA(n+1) + diphosphate. Functionally, DNA polymerase II, which participates in chromosomal DNA replication. Involved in the determination of cell fate during plant embryogenesis. Contributes to the flowering time repression. The chain is DNA polymerase epsilon catalytic subunit B (POL2B) from Arabidopsis thaliana (Mouse-ear cress).